A 2849-amino-acid polypeptide reads, in one-letter code: MAEEAAQNISDDQERCLQAACCLSFGGELSVSTDKSWGLHLCSCSPPGGGLWVEVYANHVLLMSDGKCGCPWCALNGKAEDRESQSPSSSASRQKNIWKTTSEAALSVVNEKTQAVVNEKTQAPLDCDNSADRIPHKPFIIIARAWSSGGPRFHHRRLCATGTADSTFSALLQLQGTTSAAAPCSLKMEASCCVLRLLCCAEDVATGLLPGTVTMETPTKVARPTQTSSQRVPLWPISHFPTSPRSSHGLPPGIPRTPSFTASQSGSEILYPPTQHPPVAILARNSDNFMNPVLNCSLEVEARAPPNLGFRVHMASGEALCLMMDFGDSSGVEMRLHNMSEAMAVTAYHQYSKGIFFHLLHFQLDMSTYKEAETQNTTLNVYLCQSENSCLEDSDPSNLGYELISAFVTKGVYMLKAVIYNEFHGTEVELGPYYVEIGHEAVSAFMNSSSVHEDEVLVFADSQVNQKSTVVIHHFPSIPSYNVSFISQTQVGDSQAWHSMTVWYKMQSVSVYTNGTVFATDTDITFTAVTKETIPLEFEWYFGEDPPVRTTSRSIKKRLSIPQWYRVMVKASNRMSSVVSEPHVIRVQKKIVANRLTSPSSALVNASVAFECWINFGTDVAYLWDFGDGTVSLGSSSSSHVYSREGEFTVEVLAFNNVSASTLRQQLFIVCEPCQPPLVKNMGPGKVQIWRSQPVRLGVTFEAAVFCDISQGLSYTWNLMDSEGLPVSLPAAVDTHRQTLILPSHTLEYGNYTALAKVQIEGSVVYSNYCVGLEVRAQAPVSVISEGTHLFFSRTTSSPIVLRGTQSFDPDDPGATLRYHWECATAGSPAHPCFDSSTAHQLDAAAPTVSFEAQWLSDSYDQFLVMLRVSSGGRNSSETRVFLSPYPDSAFRFVHISWVSFKDTFVNWNDELSLQAMCEDCSEIPNLSYSWDLFLVNATEKNRIEVPFCRVVGLLGSLGLGAISESSQLNLLPTEPGTADPDATTTPFSREPSPVTLGQPATSAPRGTPTEPMTGVYWIPPAGDSAVLGEAPEEGSLDLEPGPQSKGSLMTGRSERSQPTHSPDPHLSDFEAYYSDIQEAIPSGGRQPAKDTSFPGSGPSLSAEESPGDGDNLVDPSLSAGRAEPVLMIDWPKALLGRAVFQGYSSSGITEQTVTIKPYSLSSGETYVLQVSVASKHGLLGKAQLYLTVNPAPRDMACQVQPHHGLEAHTVFSVFCMSGKPDFHYEFSYQIGNTSKHTLYHGRDTQYYFVLPAGEHLDNYKVMVSTEITDGKGSKVQPCTVVVTVLPRYHGNDCLGEDLYNSSLKNLSTLQLMGSYTEIRNYITVITRILSRLSKEDKTASCNQWSRIQDALISSVCRLAFVDQEEMIGSVLMLRDLVSFSNKLGFMSAVLILKYTRALLAQGQFSGPFVIDKGVRLELIGLISRVWEVSEQENSKEEVYRHEEGITVISDLLLGCLSLNHVSTGQMEFRTLLHYNLQSSVQSLGSVQVHLPGDLAGHSPAGAETQSPCYISQLILFKKNPYPGSQAPGQIGGVVGLNLYTCSSRRPINRQWLRKPVMVEFGEEDGLDNRRNKTTFVLLRDKVNLHQFTELSENPQESLQIEIEFSKPVTRAFPVMLLVRFSEKPTPSDFLVKQIYFWDESIVQIYIPAASQKDASVGYLSLLDADYDRKPPNRYLAKAVNYTVHFQWIRCLFWDKREWKSERFSPQPGTSPEKVNCSYHRLAAFALLRRKLKASFEVSDISKLQSHPENLLPSIFIMGSVILYGFLVAKSRQVDHHEKKKAGYIFLQEASLPGHQLYAVVIDTGFRAPARLTSKVYIVLCGDNGLSETKELSCPEKPLFERNSRHTFILSAPAQLGLLRKIRLWHDSRGPSPGWFISHVMVKELHTGQGWFFPAQCWLSAGRHDGRVERELTCLQGGLGFRKLFYCKFTEYLEDFHVWLSVYSRPSSSRYLHTPRLTVSFSLLCVYACLTALVAAGGQEQPHLDVSPTLGSFRVGLLCTLLASPGAQLLSLLFRLSKEAPGSARVEPHSPLRGGAQTEAPHGPNSWGRIPDAQEPRKQPASAILSGSGRAQRKAASDNGTACPAPKLQVHGADHSRTSLMGKSHCCPPHTQAPSSGLEGLMPQWSRALQPWWSSAVWAICGTASLACSLGTGFLAYRFGQEQCVQWLHLLSLSVVCCIFITQPLMVCLMALGFAWKRRADNHFFTESLCEATRDLDSELAERSWTRLPFSSSCSIPDCAGEVEKVLAARQQARHLRWAHPPSKAQLRGTRQRMRRESRTRAALRDISMDILMLLLLLCVIYGRFSQDEYSLNQAIRKEFTRNARNCLGGLRNIADWWDWSLTTLLDGLYPGGTPSARVPGAQPGALGGKCYLIGSSVIRQLKVFPRHLCKPPRPFSALIEDSIPTCSPEVGGPENPYLIDPENQNVTLNGPGGCGTREDCVLSLGRTRTEAHTALSRLRASMWIDRSTRAVSVHFTLYNPPTQLFTSVSLRVEILPTGSLVPSSLVESFSIFRSDSALQYHLMLPQLVFLALSLIHLCVQLYRMMDKGVLSYWRKPRNWLELSVVGVSLTYYAVSGHLVTLAGDVTNQFHRGLCRAFMDLTLMASWNQRARWLRGILLFLFTLKCVYLPGIQNTMASCSSMMRHSLPSIFVAGLVGALMLAALSHLHRFLLSMWVLPPGTFTDAFPGLLFHFPRRSQKDCLLGLSKSDQRAMACYFGILLIVSATLCFGMLRGFLMTLPQKRKSFQSKSFVRLKDVTAYMWEKVLTFLRLETPKLEEAEMVENHNYYLDEFANLLDELLMKINGLSDSLQLPLLEKTSNNTGEARTEESPLVDISSYQAAEPADIKDF.

The Extracellular portion of the chain corresponds to Met1–Pro1748. N-linked (GlcNAc...) asparagine glycans are attached at residues Asn8, Asn295, Asn338, Asn376, Asn447, Asn482, Asn514, Asn605, Asn657, Asn751, Asn875, Asn926, and Asn937. PKD domains are found at residues Ser508–Lys590 and Val592–Pro673. Residues Cys674–Arg1571 form the REJ domain. The span at Asn970–Pro987 shows a compositional bias: low complexity. Disordered stretches follow at residues Asn970 to Ser1068 and Ile1081 to Leu1118. The segment covering Arg1053–Ser1068 has biased composition (basic and acidic residues). N-linked (GlcNAc...) asparagine glycosylation is found at Asn1233, Asn1301, Asn1306, Asn1572, Asn1681, and Asn1716. Positions Gln1587 to Ser1735 constitute a GAIN-B domain. A disulfide bond links Cys1691 and Cys1717. Residues Cys1691–Ser1735 are GPS. Residues Glu1749–Ala1769 form a helical membrane-spanning segment. Over Lys1770–Arg1956 the chain is Cytoplasmic. In terms of domain architecture, PLAT spans Gln1796–Thr1913. Residues Leu1957 to Gly1977 traverse the membrane as a helical segment. At Gly1978 to Ser1992 the chain is on the extracellular side. A helical transmembrane segment spans residues Phe1993–Leu2013. At Phe2014 to Ser2135 the chain is on the cytoplasmic side. Positions Ser2023 to Gln2089 are disordered. Residues Ala2136–Ala2156 traverse the membrane as a helical segment. At Tyr2157–Ser2174 the chain is on the extracellular side. Residues Val2175–Ala2195 form a helical membrane-spanning segment. Over Trp2196–Arg2281 the chain is Cytoplasmic. The chain crosses the membrane as a helical span at residues Ala2282–Tyr2302. The Extracellular portion of the chain corresponds to Gly2303 to His2522. N-linked (GlcNAc...) asparagine glycosylation is present at Asn2426. A helical transmembrane segment spans residues Leu2523–Tyr2543. Residues Arg2544–Glu2562 are Cytoplasmic-facing. A helical transmembrane segment spans residues Leu2563–Ala2583. Topologically, residues Gly2584–Gly2616 are extracellular. Residues Ile2617–Ala2637 form a helical membrane-spanning segment. Residues Ser2638–Ser2646 lie on the Cytoplasmic side of the membrane. Residues Leu2647 to Leu2667 traverse the membrane as a helical segment. The Extracellular portion of the chain corresponds to His2668–Arg2711. The chain crosses the membrane as a helical span at residues Ala2712 to Leu2732. Residues Arg2733–Phe2849 lie on the Cytoplasmic side of the membrane.

This sequence belongs to the polycystin family. In terms of assembly, heterodimer. Interacts with PKD2 to form a calcium channel. Interacts with PKD2L1; to form ciliary calcium channel. May interact with GNA12, GNAS, GNAI1 and GNAI2. In terms of tissue distribution, detected in testis and in fetal and adult heart.

The protein resides in the cell projection. The protein localises to the cilium membrane. In terms of biological role, component of a calcium-permeant ion channel formed by PKD1L2 and PKD1L1 in primary cilia, where it controls cilium calcium concentration, without affecting cytoplasmic calcium concentration, and regulates sonic hedgehog/SHH signaling and GLI2 transcription. The PKD1L1:PKD2L1 channel complex is mechanosensitive only at high pressures and is highly temperature sensitive. Also involved in left/right axis specification downstream of nodal flow by forming a complex with PKD2 in cilia to facilitate flow detection in left/right patterning. May function as a G-protein-coupled receptor. The sequence is that of Polycystin-1-like protein 1 from Homo sapiens (Human).